A 338-amino-acid chain; its full sequence is Nucleoid-associated protein CGSHiGG_07705 (338 aa).

Belongs to the YejK family.

The protein localises to the cytoplasm. It localises to the nucleoid. This is Nucleoid-associated protein CGSHiGG_07705 from Haemophilus influenzae (strain PittGG).